A 393-amino-acid chain; its full sequence is MNVPATRKDLMIVNMGPHHPSMHGVLRLIVTLDGEDVIDCEPILGYLHRGMEKIAENRTIIQYLPYVTRWDYLATMFTEAITVNGPELLGNIQVPKRAGYIRVIMLELSRIASHLLWLGPFMADIGAQTPFFYIFRERELVYDLFEAATGMRMMHNFFRIGGVASDLPHGWIDKCLDFCDYFLTGVTEYQKLITRNPIFLERVEGVGIVGTEEAINWGLSGPMLRASGVQWDLRKVDHYECYDEFDWEIQWQKEGDSLARYLVRIGEMLESIKIIQQALEGIPGGPYENLETRRFDRERDSEWNDFEYRFISKKTSPTFELPKQELYVRVEAPKGELGIFLIGDQSGFPWRWKIRPPGFINLQILPELVKRMKLADIMTILGSIDIIMGEVDR.

The protein belongs to the complex I 49 kDa subunit family. NDH is composed of at least 16 different subunits, 5 of which are encoded in the nucleus.

It localises to the plastid. The protein localises to the chloroplast thylakoid membrane. The enzyme catalyses a plastoquinone + NADH + (n+1) H(+)(in) = a plastoquinol + NAD(+) + n H(+)(out). The catalysed reaction is a plastoquinone + NADPH + (n+1) H(+)(in) = a plastoquinol + NADP(+) + n H(+)(out). NDH shuttles electrons from NAD(P)H:plastoquinone, via FMN and iron-sulfur (Fe-S) centers, to quinones in the photosynthetic chain and possibly in a chloroplast respiratory chain. The immediate electron acceptor for the enzyme in this species is believed to be plastoquinone. Couples the redox reaction to proton translocation, and thus conserves the redox energy in a proton gradient. The polypeptide is NAD(P)H-quinone oxidoreductase subunit H, chloroplastic (Manihot esculenta (Cassava)).